The chain runs to 544 residues: Methionine--tRNA ligase (544 aa).

Residues 10-20 (PYANGSLHLGH) carry the 'HIGH' region motif. Positions 141, 144, 153, and 156 each coordinate Zn(2+). Positions 329 to 333 (KLSTS) match the 'KMSKS' region motif. ATP is bound at residue T332.

The protein belongs to the class-I aminoacyl-tRNA synthetase family. MetG type 1 subfamily. In terms of assembly, monomer. Zn(2+) is required as a cofactor.

It localises to the cytoplasm. It carries out the reaction tRNA(Met) + L-methionine + ATP = L-methionyl-tRNA(Met) + AMP + diphosphate. Functionally, is required not only for elongation of protein synthesis but also for the initiation of all mRNA translation through initiator tRNA(fMet) aminoacylation. In Bacillus mycoides (strain KBAB4) (Bacillus weihenstephanensis), this protein is Methionine--tRNA ligase.